A 708-amino-acid chain; its full sequence is Potassium-transporting ATPase ATP-binding subunit 2 (708 aa).

The tract at residues 1 to 23 is disordered; the sequence is MRSPSRLPHETRDSRQRTPKTDM. Residues 7–23 are compositionally biased toward basic and acidic residues; it reads LPHETRDSRQRTPKTDM. Helical transmembrane passes span 49–69, 84–104, 235–255, and 283–303; these read MFIV…PNLF, GLIT…EAVA, IALT…VATM, and SIAI…GGLL. Asp-339 (4-aspartylphosphate intermediate) is an active-site residue. ATP contacts are provided by residues Asp-376, Glu-380, 407–414, and Lys-426; that span reads FSAKTRMS. Mg(2+)-binding residues include Asp-549 and Asp-553. 3 helical membrane-spanning segments follow: residues 619-639, 645-665, and 683-703; these read FAIL…IMGL, AIIS…PLAL, and IFIY…LIDV.

It belongs to the cation transport ATPase (P-type) (TC 3.A.3) family. Type IA subfamily. In terms of assembly, the system is composed of three essential subunits: KdpA, KdpB and KdpC.

It localises to the cell inner membrane. It catalyses the reaction K(+)(out) + ATP + H2O = K(+)(in) + ADP + phosphate + H(+). Its function is as follows. Part of the high-affinity ATP-driven potassium transport (or Kdp) system, which catalyzes the hydrolysis of ATP coupled with the electrogenic transport of potassium into the cytoplasm. This subunit is responsible for energy coupling to the transport system and for the release of the potassium ions to the cytoplasm. The sequence is that of Potassium-transporting ATPase ATP-binding subunit 2 from Nostoc sp. (strain PCC 7120 / SAG 25.82 / UTEX 2576).